The sequence spans 447 residues: tRNA (guanine(37)-N(1))-methyltransferase (447 aa).

S-adenosyl-L-methionine is bound by residues His241, 285 to 286 (DL), and 313 to 314 (DV).

The protein belongs to the class I-like SAM-binding methyltransferase superfamily. TRM5/TYW2 family. In terms of assembly, monomer.

It is found in the mitochondrion matrix. It localises to the nucleus. The protein localises to the cytoplasm. It carries out the reaction guanosine(37) in tRNA + S-adenosyl-L-methionine = N(1)-methylguanosine(37) in tRNA + S-adenosyl-L-homocysteine + H(+). Its function is as follows. Specifically methylates the N1 position of guanosine-37 in various cytoplasmic and mitochondrial tRNAs. Methylation is not dependent on the nature of the nucleoside 5' of the target nucleoside. This is the first step in the biosynthesis of wybutosine (yW), a modified base adjacent to the anticodon of tRNAs and required for accurate decoding. The polypeptide is tRNA (guanine(37)-N(1))-methyltransferase (Giardia intestinalis (strain ATCC 50803 / WB clone C6) (Giardia lamblia)).